Consider the following 118-residue polypeptide: Large ribosomal subunit protein bL20 (118 aa).

The protein belongs to the bacterial ribosomal protein bL20 family.

Functionally, binds directly to 23S ribosomal RNA and is necessary for the in vitro assembly process of the 50S ribosomal subunit. It is not involved in the protein synthesizing functions of that subunit. This Edwardsiella ictaluri (strain 93-146) protein is Large ribosomal subunit protein bL20.